The primary structure comprises 523 residues: MAVFLRRFLWLISFTLVLTDDNSVENKFYIAGVVEYRPTFMGGTSEQLLQANLAGYLEIMASGNGTTDIIVFPEATLNSVITLTAVPKFTEQSLCEEQGDDDPEIAPFLRSLACAAREYGTYLVVNVKERVSEQCTSDETCSSRGYSIHNTNVVFDRQGAVISRYRKWNLYLEPSTNRTESPEIATFTTDFNVTFGHFICFDMLFYTPAQDLVEQLGIRHVIVTKMFNSELPFLTASQFQQGWAWANRVNLLASGGSLPQGGISGSGIYAGQQGALARLMITDELVGQRKLLLAKVPLDPEEPIATDEILEPEIMTPVKLKLLQQPELKNFTTWELPMVRGSSVDKRICQEDLCCEFRVTWTLEDTQPEYNYRLGVWVGQRRYEEEQYSAIRLCGLFACKGASVESCGLVSEEEVHLQDHRVVFTDLQILGEFVRRPRRLILPSTLSSSSFYALQPSQLAWSMEELANVTRIKMELRQPHSQLMTFAIYGNYFDEYANGGAGRLGTLLFLLITPLIMMHLFRE.

An N-terminal signal peptide occupies residues 1–19; it reads MAVFLRRFLWLISFTLVLT. Residues 29 to 298 form the CN hydrolase domain; sequence YIAGVVEYRP…RKLLLAKVPL (270 aa). Asparagine 64 is a glycosylation site (N-linked (GlcNAc...) asparagine). The Proton acceptor role is filled by glutamate 74. The Proton donor role is filled by lysine 167. N-linked (GlcNAc...) asparagine glycosylation is found at asparagine 177 and asparagine 192. The active-site Nucleophile is the cysteine 200. N-linked (GlcNAc...) asparagine glycosylation is found at asparagine 330 and asparagine 468. Residue asparagine 498 is the site of GPI-anchor amidated asparagine attachment. The propeptide at 499 to 523 is removed in mature form; that stretch reads GGAGRLGTLLFLLITPLIMMHLFRE.

Belongs to the carbon-nitrogen hydrolase superfamily. BTD/VNN family. As to expression, expressed in third instar larvae.

It is found in the cell membrane. The polypeptide is Vanin-like protein 3 (Drosophila melanogaster (Fruit fly)).